Here is a 251-residue protein sequence, read N- to C-terminus: Probable transcriptional regulatory protein Cpar_0525 (251 aa).

It belongs to the TACO1 family.

Its subcellular location is the cytoplasm. The protein is Probable transcriptional regulatory protein Cpar_0525 of Chlorobaculum parvum (strain DSM 263 / NCIMB 8327) (Chlorobium vibrioforme subsp. thiosulfatophilum).